A 346-amino-acid chain; its full sequence is DNA primase small subunit PriS (346 aa).

Catalysis depends on residues D97, D99, and D280.

Belongs to the eukaryotic-type primase small subunit family. In terms of assembly, heterodimer of a small subunit (PriS) and a large subunit (PriL). Mg(2+) is required as a cofactor. It depends on Mn(2+) as a cofactor.

Functionally, catalytic subunit of DNA primase, an RNA polymerase that catalyzes the synthesis of short RNA molecules used as primers for DNA polymerase during DNA replication. The small subunit contains the primase catalytic core and has DNA synthesis activity on its own. Binding to the large subunit stabilizes and modulates the activity, increasing the rate of DNA synthesis while decreasing the length of the DNA fragments, and conferring RNA synthesis capability. The DNA polymerase activity may enable DNA primase to also catalyze primer extension after primer synthesis. May also play a role in DNA repair. This is DNA primase small subunit PriS from Thermococcus kodakarensis (strain ATCC BAA-918 / JCM 12380 / KOD1) (Pyrococcus kodakaraensis (strain KOD1)).